The following is a 257-amino-acid chain: Imidazole glycerol phosphate synthase subunit HisF (257 aa).

Residues Asp-12 and Asp-131 contribute to the active site.

This sequence belongs to the HisA/HisF family. In terms of assembly, heterodimer of HisH and HisF.

It is found in the cytoplasm. The enzyme catalyses 5-[(5-phospho-1-deoxy-D-ribulos-1-ylimino)methylamino]-1-(5-phospho-beta-D-ribosyl)imidazole-4-carboxamide + L-glutamine = D-erythro-1-(imidazol-4-yl)glycerol 3-phosphate + 5-amino-1-(5-phospho-beta-D-ribosyl)imidazole-4-carboxamide + L-glutamate + H(+). It participates in amino-acid biosynthesis; L-histidine biosynthesis; L-histidine from 5-phospho-alpha-D-ribose 1-diphosphate: step 5/9. IGPS catalyzes the conversion of PRFAR and glutamine to IGP, AICAR and glutamate. The HisF subunit catalyzes the cyclization activity that produces IGP and AICAR from PRFAR using the ammonia provided by the HisH subunit. The protein is Imidazole glycerol phosphate synthase subunit HisF of Marinomonas sp. (strain MWYL1).